Here is a 193-residue protein sequence, read N- to C-terminus: Phosphatidylglycerophosphatase and protein-tyrosine phosphatase 1 (193 aa).

The N-terminal 31 residues, 1–31 (MAASAWLEAGLARVLFYPTLLYTVFRGRVGG), are a transit peptide targeting the mitochondrion. A Tyrosine-protein phosphatase domain is found at 37–188 (WYHRIDHTVL…LKEFHKEIAA (152 aa)). Lysine 85 carries the post-translational modification N6-succinyllysine. Cysteine 132 (phosphocysteine intermediate) is an active-site residue.

Belongs to the protein-tyrosine phosphatase family. Non-receptor class dual specificity subfamily. Interacts with STYXL1; the interaction inhibits PTPMT1 catalytic activity. In terms of tissue distribution, expressed in liver and in pancreatic beta cells.

The protein resides in the mitochondrion inner membrane. The enzyme catalyses O-phospho-L-tyrosyl-[protein] + H2O = L-tyrosyl-[protein] + phosphate. The catalysed reaction is O-phospho-L-seryl-[protein] + H2O = L-seryl-[protein] + phosphate. It catalyses the reaction O-phospho-L-threonyl-[protein] + H2O = L-threonyl-[protein] + phosphate. It carries out the reaction a 1,2-diacyl-sn-glycero-3-phospho-(1'-sn-glycero-3'-phosphate) + H2O = a 1,2-diacyl-sn-glycero-3-phospho-(1'-sn-glycerol) + phosphate. The enzyme catalyses 1,2-di-(9Z-octadecenoyl)-sn-glycero-3-phospho-(1'-sn-glycerol-3'-phosphate) + H2O = 1,2-di-(9Z-octadecenoyl)-sn-glycero-3-phospho-(1'-sn-glycerol) + phosphate. The catalysed reaction is 1,2-dioctanoyl-sn-glycero-3-phospho-(1D-myo-inositol-5-phosphate) + H2O = 1,2-dioctanoyl-sn-glycero-3-phospho-(1D-myo-inositol) + phosphate. It catalyses the reaction a 1-acyl-2-hexanoyl-sn-glycero-3-phospho-(1D-myo-inositol-5-phosphate) + H2O = a 1-acyl-2-hexanoyl-sn-glycero-3-phospho-(1D-myo-inositol) + phosphate. It carries out the reaction 1,2-dibutyryl-sn-glycero-3-phospho-(1D-myo-inositol-5-phosphate) + H2O = 1,2-dibutyryl-sn-glycero-3-phospho-(1D-myo-inositol) + phosphate. It participates in phospholipid metabolism; phosphatidylglycerol biosynthesis; phosphatidylglycerol from CDP-diacylglycerol: step 2/2. Lipid phosphatase which dephosphorylates phosphatidylglycerophosphate (PGP) to phosphatidylglycerol (PG). PGP is an essential intermediate in the biosynthetic pathway of cardiolipin, a mitochondrial-specific phospholipid regulating the membrane integrity and activities of the organelle. Has also been shown to display phosphatase activity toward phosphoprotein substrates, specifically mediates dephosphorylation of mitochondrial proteins, thereby playing an essential role in ATP production. Has probably a preference for proteins phosphorylated on Ser and/or Thr residues compared to proteins phosphorylated on Tyr residues. Probably involved in regulation of insulin secretion in pancreatic beta cells. May prevent intrinsic apoptosis, probably by regulating mitochondrial membrane integrity. The chain is Phosphatidylglycerophosphatase and protein-tyrosine phosphatase 1 from Rattus norvegicus (Rat).